A 629-amino-acid chain; its full sequence is Transmembrane 9 superfamily protein C1105.08 (629 aa).

The first 26 residues, 1 to 26 (MLLPSIPSCSFSFVVFVSVLLQTCFS), serve as a signal peptide directing secretion. The Lumenal portion of the chain corresponds to 27–266 (FQLTPLSPKN…MHIESRQIRW (240 aa)). Asparagine 157 carries an N-linked (GlcNAc...) asparagine glycan. The helical transmembrane segment at 267 to 287 (IFIIHSAIIDTFLIFVVSIIL) threads the bilayer. Topologically, residues 288 to 337 (YRTLNRDINKYNSAFVDQEDVQEDFGWKLVHGDVFRPPRRPMLFSILLGT) are cytoplasmic. The chain crosses the membrane as a helical span at residues 338–358 (GAQLLFMSSGIVLFAIFGIVA). At 359–364 (PSRRGS) the chain is on the lumenal side. Residues 365–385 (LATATVALFIISGFVSGYVSA) traverse the membrane as a helical segment. At 386–401 (LSYKLMQGMLRKRNLL) the chain is on the cytoplasmic side. The chain crosses the membrane as a helical span at residues 402–422 (LTPFVVPGFMLAAALFFNMVF). At 423-436 (WSKSSSSTVPFSSW) the chain is on the lumenal side. A helical membrane pass occupies residues 437–457 (LLLIFLYLLFTVPLSFVGSLI). The Cytoplasmic portion of the chain corresponds to 458–488 (GFRSREFVPPVRTNQIPRQIPSHSIWLSSFP). A helical membrane pass occupies residues 489-509 (SAIIGGSIPFLVILIELFSIL). Residues 510-519 (DSLWFHPLYF) are Lumenal-facing. A helical membrane pass occupies residues 520 to 544 (MFGFSFFCFGILVTTCIMVSIITVY). The Cytoplasmic portion of the chain corresponds to 545 to 558 (FQLCSENYNWWWRS). A helical transmembrane segment spans residues 559 to 579 (FITPGFCGIYVFIFSVFYWFF). Residues 580-598 (KISSSSLATAVLYFGYSLL) lie on the Lumenal side of the membrane. The chain crosses the membrane as a helical span at residues 599–619 (ISVLVFFLCGSVGFFGAFLFV). At 620–629 (NKIYASIKID) the chain is on the cytoplasmic side.

Belongs to the nonaspanin (TM9SF) (TC 9.A.2) family.

It localises to the golgi apparatus membrane. Its subcellular location is the vacuole membrane. The chain is Transmembrane 9 superfamily protein C1105.08 from Schizosaccharomyces pombe (strain 972 / ATCC 24843) (Fission yeast).